Here is a 238-residue protein sequence, read N- to C-terminus: Ribonuclease PH (238 aa).

Residues Arg-86 and 124-126 (GTR) contribute to the phosphate site.

This sequence belongs to the RNase PH family. As to quaternary structure, homohexameric ring arranged as a trimer of dimers.

It carries out the reaction tRNA(n+1) + phosphate = tRNA(n) + a ribonucleoside 5'-diphosphate. Phosphorolytic 3'-5' exoribonuclease that plays an important role in tRNA 3'-end maturation. Removes nucleotide residues following the 3'-CCA terminus of tRNAs; can also add nucleotides to the ends of RNA molecules by using nucleoside diphosphates as substrates, but this may not be physiologically important. Probably plays a role in initiation of 16S rRNA degradation (leading to ribosome degradation) during starvation. The protein is Ribonuclease PH of Aliivibrio salmonicida (strain LFI1238) (Vibrio salmonicida (strain LFI1238)).